The chain runs to 730 residues: MTENKCPVTGKMGKATAGSGTTNKDWWPNQLNLNILHQNSQLSNPMSKDFNYAEEFKKLDFQALKVDLYMLMTDSQIWWPADYGNYGPLFIRMAWHSAGTYRVGDGRGGGSLGLQRFAPLNSWPDNINLDKARRLLWPIKKKYGNKISWADLLILTGNCALESMGLKTLGFGGGRVDVWEPQEDIYWGSEKEWLGDEREKGDKELENPLAAVQMGLIYVNPEGPNGNPDPLGSAHDVRETFARMAMNDEETVALIAGGHTFGKCHGAASPSYVGPAPEAAPIEEQGLGWKNTYGSGNGDDTIGSGLEGAWKANPTKWTMGYLKTLFKYDWELVKSPAGAYQWLAKNVDEEDMVIDAEDSTKKHRPMMTTADLGLRYDPIYEPIARNYLKNPEKFAHDFASAWFKLTHRDMGPISRYLGPEVPKESFIWQDPIPLVKHKLITKKDITHIKKKILDSGLSISDLVATAWASASTFRGSDKRGGANGGRIRLEPQKNWEVNEPKKLNNVLNTLKQIKENFNSSHSKDKKVSLADIIILGGCVGIEQAAKRAGYNINVPFIPGRTDAIQEQTDVKSFAVLEPKEDGFRNYLKTKYVVKPEDMLIDRAQLLTLTAPEMTVLIGGMRVLNCNYNKSKDGVFTNRPECLTNDFFVNLLDMNTVWKPKSEDKDRFEGFDRETGELKWTATRVDLIFGSNSQLRAIAEVYACDDNKEKFIQDFIFAWNKIMNADRFEIK.

A cross-link (tryptophyl-tyrosyl-methioninium (Trp-Tyr) (with M-244)) is located at residues tryptophan 95–tyrosine 218. Histidine 96 serves as the catalytic Proton acceptor. A cross-link (tryptophyl-tyrosyl-methioninium (Tyr-Met) (with W-95)) is located at residues tyrosine 218–methionine 244. Heme b is bound at residue histidine 259.

Belongs to the peroxidase family. Peroxidase/catalase subfamily. Homodimer or homotetramer. Requires heme b as cofactor. Post-translationally, formation of the three residue Trp-Tyr-Met cross-link is important for the catalase, but not the peroxidase activity of the enzyme.

It catalyses the reaction H2O2 + AH2 = A + 2 H2O. The catalysed reaction is 2 H2O2 = O2 + 2 H2O. Functionally, bifunctional enzyme with both catalase and broad-spectrum peroxidase activity. The polypeptide is Catalase-peroxidase (Clostridium botulinum (strain Eklund 17B / Type B)).